The chain runs to 275 residues: Large ribosomal subunit protein uL2 (275 aa).

Positions 223-275 are disordered; the sequence is AAMNANDHPHGGGEAKAGQGNPHPVTPWGVPTKGYKTRKNKRTQQFIVRDRRG.

The protein belongs to the universal ribosomal protein uL2 family. Part of the 50S ribosomal subunit. Forms a bridge to the 30S subunit in the 70S ribosome.

Functionally, one of the primary rRNA binding proteins. Required for association of the 30S and 50S subunits to form the 70S ribosome, for tRNA binding and peptide bond formation. It has been suggested to have peptidyltransferase activity; this is somewhat controversial. Makes several contacts with the 16S rRNA in the 70S ribosome. The chain is Large ribosomal subunit protein uL2 from Xanthomonas campestris pv. campestris (strain 8004).